A 447-amino-acid chain; its full sequence is tRNA(Ile)-lysidine synthase (447 aa).

An ATP-binding site is contributed by 31–36 (SGGMDS).

It belongs to the tRNA(Ile)-lysidine synthase family.

It localises to the cytoplasm. It carries out the reaction cytidine(34) in tRNA(Ile2) + L-lysine + ATP = lysidine(34) in tRNA(Ile2) + AMP + diphosphate + H(+). In terms of biological role, ligates lysine onto the cytidine present at position 34 of the AUA codon-specific tRNA(Ile) that contains the anticodon CAU, in an ATP-dependent manner. Cytidine is converted to lysidine, thus changing the amino acid specificity of the tRNA from methionine to isoleucine. This chain is tRNA(Ile)-lysidine synthase, found in Pseudothermotoga lettingae (strain ATCC BAA-301 / DSM 14385 / NBRC 107922 / TMO) (Thermotoga lettingae).